The chain runs to 408 residues: 5-hydroxytryptamine receptor 1A (408 aa).

Residues 1-32 are Extracellular-facing; the sequence is MDASNNTTSWNILQRGRMGPSWRRCPVSYQII. N-linked (GlcNAc...) asparagine glycosylation is found at N5 and N6. Residues 33–53 traverse the membrane as a helical segment; the sequence is ASLFLGRSFSAGIFGNACVIA. The Cytoplasmic portion of the chain corresponds to 54-67; sequence AIALERSLQNVANY. Residues 68-92 traverse the membrane as a helical segment; that stretch reads LIGSLAVTDLMVSVLVLPMAAQNQV. Residues 93–101 lie on the Extracellular side of the membrane; the sequence is LNKWTLGQV. Residues 102–126 form a helical membrane-spanning segment; it reads TCDIFISLDVLCCTSSILHLCAIAL. An intrachain disulfide couples C103 to C181. Positions 110 and 114 each coordinate serotonin. Positions 127 to 129 match the DRY motif; important for ligand-induced conformation changes motif; that stretch reads DRY. The Cytoplasmic segment spans residues 127-146; the sequence is DRYWAITDPIDYVNKRTPRR. A helical membrane pass occupies residues 147–168; that stretch reads AAVLISITWIVGFSISIPPMLG. The Extracellular portion of the chain corresponds to 169–187; sequence WRTPEDRSDPNACRISEDP. A helical membrane pass occupies residues 188–210; that stretch reads GYTIYSTFGAFYIPLILMLVLYG. The Cytoplasmic portion of the chain corresponds to 211-333; that stretch reads KIFKAARFRI…LARERKTVKT (123 aa). The interval 235–255 is disordered; that stretch reads TCLSVSQQSPKEKQRGAQQEL. The 1D-myo-inositol 4-phosphate site is built by K332, T333, and G339. The helical transmembrane segment at 334–357 threads the bilayer; that stretch reads LGIIMGTFILCWLPFFIVALVLPF. Residues 358 to 364 lie on the Extracellular side of the membrane; that stretch reads CETCHMP. A helical membrane pass occupies residues 365–389; sequence HLLFDIITWLGYSNSLLNPIIYAYF. An NPxxY motif; important for ligand-induced conformation changes and signaling motif is present at residues 382–386; that stretch reads NPIIY. 1D-myo-inositol 4-phosphate contacts are provided by F389, N390, and K391. At 390–408 the chain is on the cytoplasmic side; the sequence is NKDFQSAFKKIIKCKFCRQ.

Belongs to the G-protein coupled receptor 1 family. 5-hydroxytryptamine receptor subfamily. HTR1A sub-subfamily. First expressed in the rostral part of the brain stem at stage 22. At later stages of development, expression is localized to serotonergic neurons. The expression pattern changes in the tadpole of stage 41 where, in addition to serotonergic neurons, expression is also localized to the inner nuclear layer (INL) of the developing retina. This expression pattern continues through to the start of metamorphosis (stage 46). In adults, expressed in the brain, in particular the telencephalon, diencephalon and mesencephalon. In the telencephalic region, expression is localized to the lateral, dorsal and medial pallium, and in the striatum, septum and amygdala. In the mesencephalic region, expression is strongest in the optic tectum and torus semicircularis with moderate levels of expression in tegmental nuclei. In diencephalon, localized to the dorsal and ventral thalamus and the preoptic area of the hypothalamus.

It localises to the cell membrane. With respect to regulation, G-protein coupled receptor activity is regulated by lipids: phosphatidylinositol 4-phosphate increases HTR1A-mediated activity. Functionally, G-protein coupled receptor for 5-hydroxytryptamine (serotonin). Also functions as a receptor for various drugs and psychoactive substances. Ligand binding causes a conformation change that triggers signaling via guanine nucleotide-binding proteins (G proteins) and modulates the activity of downstream effectors, such as adenylate cyclase. HTR1A is coupled to G(i)/G(o) G alpha proteins and mediates inhibitory neurotransmission: signaling inhibits adenylate cyclase activity and activates a phosphatidylinositol-calcium second messenger system that regulates the release of Ca(2+) ions from intracellular stores. Beta-arrestin family members regulate signaling by mediating both receptor desensitization and resensitization processes. Activation of the receptor may play a role in the exit from G0 phase and in promoting DNA synthesis. The chain is 5-hydroxytryptamine receptor 1A from Xenopus laevis (African clawed frog).